A 349-amino-acid polypeptide reads, in one-letter code: Alpha-centractin (349 aa).

M1 bears the N-acetylmethionine mark.

The protein belongs to the actin family. ARP1 subfamily. In terms of assembly, part of the ACTR1A/ACTB filament around which the dynactin complex is built. The filament contains 8 copies of ACTR1A and 1 ACTB. Interacts with dynein and adapters such as BICD2. Interacts with BCCIP (isoform 2/alpha).

It localises to the cytoplasm. The protein resides in the cytoskeleton. Its subcellular location is the microtubule organizing center. The protein localises to the centrosome. It is found in the cell cortex. Part of the ACTR1A/ACTB filament around which the dynactin complex is built. The dynactin multiprotein complex activates the molecular motor dynein for ultra-processive transport along microtubules. The sequence is that of Alpha-centractin (ACTR1A) from Sus scrofa (Pig).